Reading from the N-terminus, the 112-residue chain is Integration host factor subunit alpha (112 aa).

The protein belongs to the bacterial histone-like protein family. As to quaternary structure, heterodimer of an alpha and a beta chain.

Functionally, this protein is one of the two subunits of integration host factor, a specific DNA-binding protein that functions in genetic recombination as well as in transcriptional and translational control. The protein is Integration host factor subunit alpha of Rhizobium leguminosarum bv. trifolii (strain WSM2304).